Reading from the N-terminus, the 274-residue chain is MPDFPPKPSVKADIAIIGGSGLYDPGVLENAKEYKIYTPYGEPSDYIIVGELGGKRVAFLPRHGRGHRIPPHKINYRANIWALKMLGVKWVIAVSAVGSLREDYKPGDIVVPDQFIDMTKSRVYTFFDEGIVAHVSMADPFCEHLRQEIISTARELGYRVHPRGTYICIEGPRFSTRAESRVWREVFKADIIGMTLVPEVNLACEAQLCYATIALVTDYDVWAERPVTAEEVARVMKENTEKAKKILYKLIPRLPPEPDKARCSCCSSLETALL.

Residues Ser20, 62-63, and 95-96 each bind phosphate; these read RH and SA. Position 194 (Met194) interacts with substrate. Residue Thr195 participates in phosphate binding. Substrate is bound at residue 218-220; that stretch reads DYD.

The protein belongs to the PNP/MTAP phosphorylase family. MTAP subfamily. In terms of assembly, homohexamer. Dimer of a homotrimer.

It catalyses the reaction S-methyl-5'-thioadenosine + phosphate = 5-(methylsulfanyl)-alpha-D-ribose 1-phosphate + adenine. It functions in the pathway amino-acid biosynthesis; L-methionine biosynthesis via salvage pathway; S-methyl-5-thio-alpha-D-ribose 1-phosphate from S-methyl-5'-thioadenosine (phosphorylase route): step 1/1. Functionally, catalyzes the reversible phosphorylation of S-methyl-5'-thioadenosine (MTA) to adenine and 5-methylthioribose-1-phosphate. Involved in the breakdown of MTA, a major by-product of polyamine biosynthesis. Responsible for the first step in the methionine salvage pathway after MTA has been generated from S-adenosylmethionine. Has broad substrate specificity with 6-aminopurine nucleosides as preferred substrates. The protein is S-methyl-5'-thioadenosine phosphorylase of Hyperthermus butylicus (strain DSM 5456 / JCM 9403 / PLM1-5).